Reading from the N-terminus, the 130-residue chain is Glycine cleavage system H protein (130 aa).

The Lipoyl-binding domain occupies 25-106 (MALIGISDFA…PFDSWMIKVK (82 aa)). Lysine 66 carries the post-translational modification N6-lipoyllysine.

The protein belongs to the GcvH family. The glycine cleavage system is composed of four proteins: P, T, L and H. It depends on (R)-lipoate as a cofactor.

Functionally, the glycine cleavage system catalyzes the degradation of glycine. The H protein shuttles the methylamine group of glycine from the P protein to the T protein. The protein is Glycine cleavage system H protein of Leptospira interrogans serogroup Icterohaemorrhagiae serovar copenhageni (strain Fiocruz L1-130).